Reading from the N-terminus, the 267-residue chain is E3 SUMO-protein ligase MMS21 (267 aa).

An SP-RING-type zinc finger spans residues 169–256 (DEDDLQIEGG…IAKMKESQEQ (88 aa)). 4 residues coordinate Zn(2+): cysteine 200, histidine 202, cysteine 221, and cysteine 226.

This sequence belongs to the NSE2 family. Component of the Smc5-Smc6 complex which consists of KRE29, NSE1, NSE2/MMS21, NSE3, NSE4, NSE5, SMC5 and SMC6.

The protein localises to the nucleus. The protein resides in the cytoplasm. It participates in protein modification; protein sumoylation. Its function is as follows. Acts as an E3 ligase mediating SUMO/Smt3 attachment to SMC5 and YKU70. Acts in a DNA repair pathway for removal of UV-induced DNA damage that is distinct from classical nucleotide excision repair and in repair of ionizing radiation damage. Functions in homologous recombination repair of DNA double strand breaks and in recovery of stalled replication forks. This Saccharomyces cerevisiae (strain ATCC 204508 / S288c) (Baker's yeast) protein is E3 SUMO-protein ligase MMS21 (MMS21).